The following is an 86-amino-acid chain: Curamycin polyketide synthase acyl carrier protein (86 aa).

The 80-residue stretch at 7–86 folds into the Carrier domain; it reads QVTVEELATL…VVNGALASGA (80 aa). Serine 44 is modified (O-(pantetheine 4'-phosphoryl)serine).

4'-phosphopantetheine is transferred from CoA to a specific serine of the apo-ACP-like protein.

It participates in antibiotic biosynthesis; curamycin biosynthesis. Functionally, acyl carrier protein. The protein is Curamycin polyketide synthase acyl carrier protein (curE) of Streptomyces cyaneus (Streptomyces curacoi).